Reading from the N-terminus, the 1331-residue chain is Contactin-associated protein-like 2 (1331 aa).

The N-terminal stretch at 1–27 (MLAAPRAGCGAALLLWIVSSCLCRAWT) is a signal peptide. Residues 28 to 1262 (APSTSQKCDE…IRNGVNRNSA (1235 aa)) lie on the Extracellular side of the membrane. The F5/8 type C domain occupies 35–181 (CDEPLVSGLP…IGLRIEVYGC (147 aa)). A disulfide bond links Cys-35 and Cys-181. Laminin G-like domains lie at 187 to 368 (VINF…SFSC) and 373 to 552 (TVPV…IDMC). 8 N-linked (GlcNAc...) asparagine glycosylation sites follow: Asn-289, Asn-346, Asn-363, Asn-379, Asn-436, Asn-506, Asn-507, and Asn-546. A disulfide bridge links Cys-336 with Cys-368. 4 disulfides stabilise this stretch: Cys-520–Cys-552, Cys-558–Cys-569, Cys-563–Cys-578, and Cys-580–Cys-590. Positions 554–591 (IIDRCVPNHCERGGKCSQTWDSFKCTCDETGYTGATCH) constitute an EGF-like 1 domain. The Fibrinogen C-terminal domain occupies 592 to 798 (NSIYEPSCEA…LRCQGDRNYW (207 aa)). N-linked (GlcNAc...) asparagine glycans are attached at residues Asn-630 and Asn-735. In terms of domain architecture, Laminin G-like 3 spans 799-963 (NAASFPNPSS…KVTSGFISGC (165 aa)). 4 disulfide bridges follow: Cys-936-Cys-963, Cys-967-Cys-980, Cys-974-Cys-989, and Cys-991-Cys-1001. Positions 964–1002 (SGHCTSYGTNCENGGKCLERYHGYSCDCSNTAYDGTFCN) constitute an EGF-like 2 domain. Residues 1023-1214 (ATNARDSSSR…IQGELVESNC (192 aa)) form the Laminin G-like 4 domain. N-linked (GlcNAc...) asparagine glycans are attached at residues Asn-1116 and Asn-1198. An intrachain disulfide couples Cys-1178 to Cys-1214. The helical transmembrane segment at 1263 to 1283 (IIGGVIAVVIFTILCTLVFLI) threads the bilayer. The Cytoplasmic segment spans residues 1284 to 1331 (RYMFRHKGTYHTNEAKGAESAESADAAIMNNDPNFTETIDESKKEWLI). Phosphoserine occurs at positions 1303 and 1306.

The protein belongs to the neurexin family. In terms of assembly, interacts (via C-terminus) with KCNA2.

Its subcellular location is the membrane. It localises to the cell projection. It is found in the axon. The protein localises to the cell junction. The protein resides in the paranodal septate junction. Functionally, required for gap junction formation. Required, with CNTNAP1, for radial and longitudinal organization of myelinated axons. Plays a role in the formation of functional distinct domains critical for saltatory conduction of nerve impulses in myelinated nerve fibers. Demarcates the juxtaparanodal region of the axo-glial junction. In Pongo abelii (Sumatran orangutan), this protein is Contactin-associated protein-like 2 (CNTNAP2).